The sequence spans 100 residues: MDLVKYLTFSMILFLLGIWGIFLNRKNILIMLMSIELMLLAVNLNFLVFSVYLDDMMGQLFALFVLTVAAAESAIGLAILVITFRIRGTIAVEFINCMKG.

The next 3 membrane-spanning stretches (helical) occupy residues 3–23 (LVKYLTFSMILFLLGIWGIFL), 28–48 (ILIMLMSIELMLLAVNLNFLV), and 62–82 (ALFVLTVAAAESAIGLAILVI).

Belongs to the complex I subunit 4L family. As to quaternary structure, complex I is composed of about 45 different subunits.

The protein localises to the mitochondrion membrane. It carries out the reaction a ubiquinone + NADH + 5 H(+)(in) = a ubiquinol + NAD(+) + 4 H(+)(out). Its function is as follows. Core subunit of the mitochondrial membrane respiratory chain NADH dehydrogenase (Complex I) that is believed to belong to the minimal assembly required for catalysis. Complex I functions in the transfer of electrons from NADH to the respiratory chain. The immediate electron acceptor for the enzyme is believed to be ubiquinone. In Marchantia polymorpha (Common liverwort), this protein is NADH-ubiquinone oxidoreductase chain 4L (ND4L).